A 272-amino-acid chain; its full sequence is Homeobox protein SIX3 (272 aa).

A DNA-binding region (homeobox) is located at residues 169–228; sequence GEQKTHCFKERTRGLLREWYLQDPYPNPGKKRELAHATGLTPTQVGNWFKNRRQRDRAAA. The disordered stretch occupies residues 244 to 272; that stretch reads CTLSGGDSSERADGDTFLSVTDSDSDLDV.

It belongs to the SIX/Sine oculis homeobox family. As to quaternary structure, interacts with GMNN.

The protein localises to the nucleus. In terms of biological role, transcriptional regulator which can act as both a transcriptional repressor and activator by binding a ATTA homeodomain core recognition sequence on these target genes. During forebrain development represses WNT1 expression allowing zona limitans intrathalamica formation and thereby ensuring proper anterio-posterior patterning of the diencephalon and formation of the rostral diencephalon. Acts as a direct upstream activator of SHH expression in the rostral diencephalon ventral midline and that in turn SHH maintains its expression. In addition, Six3 activity is required for the formation of the telencephalon. During postnatal stages of brain development is necessary for ependymal cell maturation by promoting the maturation of radial glia into ependymal cells through regulation of neuroblast proliferation and migration. Acts on the proliferation and differentiation of neural progenitor cells through activating transcription of CCND1 and CCND2. During early lens formation plays a role in lens induction and specification by activating directly PAX6 in the presumptive lens ectoderm. In turn PAX6 activates SIX3 resulting in activation of PDGFRA and CCND1 promoting cell proliferation. Also is required for the neuroretina development by directly suppressing WNT8B expression in the anterior neural plate territory. Its action during retina development and lens morphogenesis is AES and TLE4-dependent manner. Furthermore, during eye development regulates several genes expression. Before and during early lens development represses the CRYGF promoter by binding a SIX repressor element. Directly activates RHO transcription, or cooperates with CRX or NRL. Six3 also functions in the formation of the proximodistal axis of the optic cup, and promotes the formation of optic vesicles-like structures. During pituitary development, acts in parallel or alternatively with HESX1 to control cell proliferation through Wnt/beta-catenin pathway. Plays a role in eye development by suppressing WNT1 expression and in dorsal-ventral patterning by repressing BMP signaling pathway. This is Homeobox protein SIX3 (six3) from Oryzias latipes (Japanese rice fish).